A 253-amino-acid chain; its full sequence is Probable glutathione transferase omega-2 (253 aa).

A GST N-terminal domain is found at Gly-25–Arg-105. Cys-35 functions as the Nucleophile in the catalytic mechanism. Glutathione contacts are provided by residues Lys-62, Val-75, and Glu-89–Ser-90. Positions Asp-110–Phe-238 constitute a GST C-terminal domain.

Belongs to the GST superfamily. Omega family.

It catalyses the reaction RX + glutathione = an S-substituted glutathione + a halide anion + H(+). It carries out the reaction L-dehydroascorbate + 2 glutathione = glutathione disulfide + L-ascorbate. The catalysed reaction is methylarsonate + 2 glutathione + H(+) = methylarsonous acid + glutathione disulfide + H2O. Its function is as follows. Exhibits glutathione-dependent thiol transferase activity. Has dehydroascorbate reductase activity and may contribute to the recycling of ascorbic acid. Participates in the biotransformation of inorganic arsenic and reduces monomethylarsonic acid (MMA). This chain is Probable glutathione transferase omega-2, found in Caenorhabditis briggsae.